The chain runs to 318 residues: Biotin synthase (318 aa).

One can recognise a Radical SAM core domain in the interval Leu-44–Arg-273. Positions 62, 66, and 69 each coordinate [4Fe-4S] cluster. [2Fe-2S] cluster is bound by residues Ser-106, Cys-138, Cys-198, and Arg-268.

It belongs to the radical SAM superfamily. Biotin synthase family. Homodimer. The cofactor is [4Fe-4S] cluster. Requires [2Fe-2S] cluster as cofactor.

The enzyme catalyses (4R,5S)-dethiobiotin + (sulfur carrier)-SH + 2 reduced [2Fe-2S]-[ferredoxin] + 2 S-adenosyl-L-methionine = (sulfur carrier)-H + biotin + 2 5'-deoxyadenosine + 2 L-methionine + 2 oxidized [2Fe-2S]-[ferredoxin]. It participates in cofactor biosynthesis; biotin biosynthesis; biotin from 7,8-diaminononanoate: step 2/2. In terms of biological role, catalyzes the conversion of dethiobiotin (DTB) to biotin by the insertion of a sulfur atom into dethiobiotin via a radical-based mechanism. In Clostridium botulinum (strain Alaska E43 / Type E3), this protein is Biotin synthase.